Consider the following 227-residue polypeptide: 2,3-bisphosphoglycerate-dependent phosphoglycerate mutase (227 aa).

Substrate contacts are provided by residues 7 to 14, 20 to 21, R59, 86 to 89, K97, 113 to 114, and 182 to 183; these read RHGQSEWN, TG, ERHY, RR, and GN. The active-site Tele-phosphohistidine intermediate is the H8. E86 functions as the Proton donor/acceptor in the catalytic mechanism.

It belongs to the phosphoglycerate mutase family. BPG-dependent PGAM subfamily. In terms of assembly, homodimer.

The enzyme catalyses (2R)-2-phosphoglycerate = (2R)-3-phosphoglycerate. It functions in the pathway carbohydrate degradation; glycolysis; pyruvate from D-glyceraldehyde 3-phosphate: step 3/5. Its function is as follows. Catalyzes the interconversion of 2-phosphoglycerate and 3-phosphoglycerate. This Neisseria meningitidis serogroup C (strain 053442) protein is 2,3-bisphosphoglycerate-dependent phosphoglycerate mutase.